The primary structure comprises 347 residues: MRIEEDLKLGFKDVLIRPKRSTLKSRSDVELERQFTFKHSGQSWSGVPIIAANMDTVGTFSMASALASFDILTAVHKHYSVEEWQAFINNSSADVLKHVMVSTGTSDADFEKTKQILDLNPALNFVCIDVANGYSEHFVQFVAKAREAWPTKTICAGNVVTGEMCEELILSGADIVKVGIGPGSVCTTRVKTGVGYPQLSAVIECADAAHGLGGMIVSDGGCTTPGDVAKAFGGGADFVMLGGMLAGHEESGGRIVEENGEKFMLFYGMSSESAMKRHVGGVAEYRAAEGKTVKLPLRGPVENTARDILGGLRSACTYVGASRLKELTKRTTFIRVLEQENRIFNNL.

NADP(+) is bound at residue 108 to 131 (ADFEKTKQILDLNPALNFVCIDVA). Gly-181 and Gly-183 together coordinate K(+). The active-site Thioimidate intermediate is Cys-186. 216–239 (IVSDGGCTTPGDVAKAFGGGADFV) is an NADP(+) binding site.

Belongs to the IMPDH/GMPR family. GuaC type 1 subfamily. In terms of assembly, homotetramer.

The catalysed reaction is IMP + NH4(+) + NADP(+) = GMP + NADPH + 2 H(+). Its function is as follows. Catalyzes the irreversible NADPH-dependent deamination of GMP to IMP. It functions in the conversion of nucleobase, nucleoside and nucleotide derivatives of G to A nucleotides, and in maintaining the intracellular balance of A and G nucleotides. This is GMP reductase from Escherichia coli O7:K1 (strain IAI39 / ExPEC).